A 153-amino-acid chain; its full sequence is MRVYEGNLISEGKKYGIVVGRFNEFIGSKLLSGALDALKRHGVKEDEIEISWVPGAFEIPLVAKKMAKTKKYDSVICLGAVIKGSTAHFDYVSSEVSKGIANVSLDTEVPVIFGVLTTDNIEQAIERAGTKAGNKGYEAAVTAIEMANLLSEI.

Residues Phe-22, 56-58, and 80-82 contribute to the 5-amino-6-(D-ribitylamino)uracil site; these read AFE and AVI. 85-86 is a (2S)-2-hydroxy-3-oxobutyl phosphate binding site; it reads ST. Catalysis depends on His-88, which acts as the Proton donor. 5-amino-6-(D-ribitylamino)uracil is bound at residue Phe-113. (2S)-2-hydroxy-3-oxobutyl phosphate is bound at residue Arg-127.

The protein belongs to the DMRL synthase family.

The enzyme catalyses (2S)-2-hydroxy-3-oxobutyl phosphate + 5-amino-6-(D-ribitylamino)uracil = 6,7-dimethyl-8-(1-D-ribityl)lumazine + phosphate + 2 H2O + H(+). Its pathway is cofactor biosynthesis; riboflavin biosynthesis; riboflavin from 2-hydroxy-3-oxobutyl phosphate and 5-amino-6-(D-ribitylamino)uracil: step 1/2. Functionally, catalyzes the formation of 6,7-dimethyl-8-ribityllumazine by condensation of 5-amino-6-(D-ribitylamino)uracil with 3,4-dihydroxy-2-butanone 4-phosphate. This is the penultimate step in the biosynthesis of riboflavin. This is 6,7-dimethyl-8-ribityllumazine synthase from Clostridium novyi (strain NT).